The chain runs to 101 residues: Small ribosomal subunit protein uS10 (101 aa).

This sequence belongs to the universal ribosomal protein uS10 family. In terms of assembly, part of the 30S ribosomal subunit.

Involved in the binding of tRNA to the ribosomes. The protein is Small ribosomal subunit protein uS10 of Phocaeicola vulgatus (strain ATCC 8482 / DSM 1447 / JCM 5826 / CCUG 4940 / NBRC 14291 / NCTC 11154) (Bacteroides vulgatus).